The sequence spans 295 residues: Phosphoserine phosphatase, chloroplastic (295 aa).

Residues 1–54 (MEALTTSRVVPVQVPCRKLSSLFANFSCLELRRYPCRGLVSIMNHPKLLRPVTA) constitute a chloroplast transit peptide. The Nucleophile role is filled by Asp-89. Residues Asp-89 and Asp-91 each contribute to the Mg(2+) site. The Proton donor role is filled by Asp-91. Substrate-binding positions include Glu-98, Arg-134, 178–179 (SG), and Lys-227. Asp-248 is a binding site for Mg(2+).

The protein belongs to the HAD-like hydrolase superfamily. SerB family. It depends on Mg(2+) as a cofactor. In terms of tissue distribution, ubiquitous. Mainly expressed in shoot and root meristems, vasculature, pollen, anthers, carpels and seeds.

It is found in the plastid. Its subcellular location is the chloroplast. The catalysed reaction is O-phospho-L-serine + H2O = L-serine + phosphate. It catalyses the reaction O-phospho-D-serine + H2O = D-serine + phosphate. It participates in amino-acid biosynthesis; L-serine biosynthesis; L-serine from 3-phospho-D-glycerate: step 3/3. Approximately 60% inhibition of PSP activity is observed in presence of 10 mM serine. Its function is as follows. Catalyzes the last step in the plastidial phosphorylated pathway of serine biosynthesis (PPSB). The reaction mechanism proceeds via the formation of a phosphoryl-enzyme intermediates. Required for embryo, pollen and root development. May be required preferentially for serine biosynthesis in non-photosynthetic tissues. In Arabidopsis thaliana (Mouse-ear cress), this protein is Phosphoserine phosphatase, chloroplastic (PSP).